We begin with the raw amino-acid sequence, 363 residues long: MAP kinase kinase skh1/pek1 (363 aa).

Positions 79 to 343 (ILYMNSLGEG…PQKMLTHPWV (265 aa)) constitute a Protein kinase domain. Residues 85–93 (LGEGVSGSV) and K108 each bind ATP. Residue D206 is the Proton acceptor of the active site. The residue at position 234 (S234) is a Phosphoserine. T238 is modified (phosphothreonine).

This sequence belongs to the protein kinase superfamily. STE Ser/Thr protein kinase family. MAP kinase kinase subfamily.

It carries out the reaction L-seryl-[protein] + ATP = O-phospho-L-seryl-[protein] + ADP + H(+). The enzyme catalyses L-threonyl-[protein] + ATP = O-phospho-L-threonyl-[protein] + ADP + H(+). It catalyses the reaction L-tyrosyl-[protein] + ATP = O-phospho-L-tyrosyl-[protein] + ADP + H(+). Activated by mkh1. Involved in the mkh1 signal transduction pathway that plays a role in cell wall integrity. Activates spm1/pmk1 via phosphorylation. This is MAP kinase kinase skh1/pek1 (skh1) from Schizosaccharomyces pombe (strain 972 / ATCC 24843) (Fission yeast).